The sequence spans 786 residues: Endonuclease MutS2 (786 aa).

335–342 (GPNTGGKT) lines the ATP pocket. Residues 711-786 (LDLRGERFEN…GLGVTVVELK (76 aa)) form the Smr domain.

It belongs to the DNA mismatch repair MutS family. MutS2 subfamily. In terms of assembly, homodimer. Binds to stalled ribosomes, contacting rRNA.

Functionally, endonuclease that is involved in the suppression of homologous recombination and thus may have a key role in the control of bacterial genetic diversity. Acts as a ribosome collision sensor, splitting the ribosome into its 2 subunits. Detects stalled/collided 70S ribosomes which it binds and splits by an ATP-hydrolysis driven conformational change. Acts upstream of the ribosome quality control system (RQC), a ribosome-associated complex that mediates the extraction of incompletely synthesized nascent chains from stalled ribosomes and their subsequent degradation. Probably generates substrates for RQC. The protein is Endonuclease MutS2 of Bacillus cereus (strain B4264).